A 162-amino-acid polypeptide reads, in one-letter code: Phosphopantetheine adenylyltransferase (162 aa).

Serine 11 is a binding site for substrate. ATP contacts are provided by residues serine 11–phenylalanine 12 and histidine 19. Substrate contacts are provided by lysine 43, valine 76, and arginine 90. ATP-binding positions include glycine 91–arginine 93, glutamate 101, and leucine 126–serine 132.

The protein belongs to the bacterial CoaD family. In terms of assembly, homohexamer. Requires Mg(2+) as cofactor.

It is found in the cytoplasm. It catalyses the reaction (R)-4'-phosphopantetheine + ATP + H(+) = 3'-dephospho-CoA + diphosphate. It functions in the pathway cofactor biosynthesis; coenzyme A biosynthesis; CoA from (R)-pantothenate: step 4/5. Its function is as follows. Reversibly transfers an adenylyl group from ATP to 4'-phosphopantetheine, yielding dephospho-CoA (dPCoA) and pyrophosphate. The chain is Phosphopantetheine adenylyltransferase from Streptococcus suis (strain 05ZYH33).